The following is a 292-amino-acid chain: 4-hydroxybenzoate octaprenyltransferase (292 aa).

8 helical membrane-spanning segments follow: residues 23 to 43 (PIGI…AGEG), 47 to 67 (PGVA…GCVI), 98 to 118 (LILF…MNWL), 141 to 161 (HLPQ…TFAA), 164 to 184 (GSIP…ALIY), 211 to 231 (YDRE…AGIG), 233 to 253 (YLGL…FSVY), and 270 to 290 (FLNN…DYLW).

It belongs to the UbiA prenyltransferase family. Mg(2+) is required as a cofactor.

It is found in the cell inner membrane. It carries out the reaction all-trans-octaprenyl diphosphate + 4-hydroxybenzoate = 4-hydroxy-3-(all-trans-octaprenyl)benzoate + diphosphate. It functions in the pathway cofactor biosynthesis; ubiquinone biosynthesis. In terms of biological role, catalyzes the prenylation of para-hydroxybenzoate (PHB) with an all-trans polyprenyl group. Mediates the second step in the final reaction sequence of ubiquinone-8 (UQ-8) biosynthesis, which is the condensation of the polyisoprenoid side chain with PHB, generating the first membrane-bound Q intermediate 3-octaprenyl-4-hydroxybenzoate. The polypeptide is 4-hydroxybenzoate octaprenyltransferase (Methylococcus capsulatus (strain ATCC 33009 / NCIMB 11132 / Bath)).